The chain runs to 212 residues: Large ribosomal subunit protein uL3 (212 aa).

It belongs to the universal ribosomal protein uL3 family. Part of the 50S ribosomal subunit. Forms a cluster with proteins L14 and L19.

In terms of biological role, one of the primary rRNA binding proteins, it binds directly near the 3'-end of the 23S rRNA, where it nucleates assembly of the 50S subunit. This chain is Large ribosomal subunit protein uL3, found in Ruminiclostridium cellulolyticum (strain ATCC 35319 / DSM 5812 / JCM 6584 / H10) (Clostridium cellulolyticum).